A 325-amino-acid polypeptide reads, in one-letter code: D-alanine--D-alanine ligase (325 aa).

An ATP-grasp domain is found at 102-300 (KQIFRAAGIP…FTELVERMLQ (199 aa)). ATP is bound at residue 130–185 (AAELGSPLVIKPSNNGSTVGISIVRDERSFAQGLELARSVSSRIFLERYVPGKEIT). Residues Asp-254, Glu-267, and Asn-269 each contribute to the Mg(2+) site.

It belongs to the D-alanine--D-alanine ligase family. The cofactor is Mg(2+). It depends on Mn(2+) as a cofactor.

The protein resides in the cytoplasm. The catalysed reaction is 2 D-alanine + ATP = D-alanyl-D-alanine + ADP + phosphate + H(+). Its pathway is cell wall biogenesis; peptidoglycan biosynthesis. In terms of biological role, cell wall formation. This is D-alanine--D-alanine ligase from Synechococcus sp. (strain JA-2-3B'a(2-13)) (Cyanobacteria bacterium Yellowstone B-Prime).